A 455-amino-acid polypeptide reads, in one-letter code: 23S rRNA (uracil(1939)-C(5))-methyltransferase RlmD (455 aa).

Residues 12–70 (SKQLSAKLSLSVTQLDHLGAGIAQHQGKIVFIPGVLPGETATVQFVEQKKSYAKAKLIS) form the TRAM domain. The [4Fe-4S] cluster site is built by C83, C89, C92, and C174. S-adenosyl-L-methionine-binding residues include Q288, F317, N322, E338, D365, and D385. The Nucleophile role is filled by C411.

Belongs to the class I-like SAM-binding methyltransferase superfamily. RNA M5U methyltransferase family. RlmD subfamily.

It catalyses the reaction uridine(1939) in 23S rRNA + S-adenosyl-L-methionine = 5-methyluridine(1939) in 23S rRNA + S-adenosyl-L-homocysteine + H(+). Catalyzes the formation of 5-methyl-uridine at position 1939 (m5U1939) in 23S rRNA. The chain is 23S rRNA (uracil(1939)-C(5))-methyltransferase RlmD from Shewanella frigidimarina (strain NCIMB 400).